The chain runs to 179 residues: Large ribosomal subunit protein uL5 (179 aa).

The protein belongs to the universal ribosomal protein uL5 family. Part of the 50S ribosomal subunit; part of the 5S rRNA/L5/L18/L25 subcomplex. Contacts the 5S rRNA and the P site tRNA. Forms a bridge to the 30S subunit in the 70S ribosome.

In terms of biological role, this is one of the proteins that bind and probably mediate the attachment of the 5S RNA into the large ribosomal subunit, where it forms part of the central protuberance. In the 70S ribosome it contacts protein S13 of the 30S subunit (bridge B1b), connecting the 2 subunits; this bridge is implicated in subunit movement. Contacts the P site tRNA; the 5S rRNA and some of its associated proteins might help stabilize positioning of ribosome-bound tRNAs. In Staphylococcus aureus (strain MW2), this protein is Large ribosomal subunit protein uL5.